The primary structure comprises 345 residues: Quinolinate synthase (345 aa).

Positions 69 and 87 each coordinate iminosuccinate. Residue cysteine 132 coordinates [4Fe-4S] cluster. Iminosuccinate-binding positions include 158 to 160 (YVN) and serine 175. Cysteine 217 is a [4Fe-4S] cluster binding site. Residues 243–245 (HPE) and threonine 260 contribute to the iminosuccinate site. Cysteine 303 contributes to the [4Fe-4S] cluster binding site.

The protein belongs to the quinolinate synthase family. Type 2 subfamily. [4Fe-4S] cluster serves as cofactor.

Its subcellular location is the cytoplasm. It catalyses the reaction iminosuccinate + dihydroxyacetone phosphate = quinolinate + phosphate + 2 H2O + H(+). The protein operates within cofactor biosynthesis; NAD(+) biosynthesis; quinolinate from iminoaspartate: step 1/1. Catalyzes the condensation of iminoaspartate with dihydroxyacetone phosphate to form quinolinate. In Agrobacterium fabrum (strain C58 / ATCC 33970) (Agrobacterium tumefaciens (strain C58)), this protein is Quinolinate synthase.